A 401-amino-acid chain; its full sequence is Glutamyl-tRNA reductase (401 aa).

Substrate contacts are provided by residues Thr-45–Arg-48, Ser-101, Glu-106–Gln-108, and Gln-112. Catalysis depends on Cys-46, which acts as the Nucleophile. Position 177 to 182 (Gly-177 to Gly-182) interacts with NADP(+).

This sequence belongs to the glutamyl-tRNA reductase family. Homodimer.

The enzyme catalyses (S)-4-amino-5-oxopentanoate + tRNA(Glu) + NADP(+) = L-glutamyl-tRNA(Glu) + NADPH + H(+). Its pathway is porphyrin-containing compound metabolism; protoporphyrin-IX biosynthesis; 5-aminolevulinate from L-glutamyl-tRNA(Glu): step 1/2. Its function is as follows. Catalyzes the NADPH-dependent reduction of glutamyl-tRNA(Glu) to glutamate 1-semialdehyde (GSA). This is Glutamyl-tRNA reductase from Clostridium botulinum (strain Alaska E43 / Type E3).